The chain runs to 415 residues: Casein kinase I isoform delta (415 aa).

Residues 9-277 (YRLGRKIGSG…YLRQLFRNLF (269 aa)) form the Protein kinase domain. Residues 15–23 (IGSGSFGDI) and Lys38 contribute to the ATP site. The Proton acceptor role is filled by Asp128. A centrosomal localization signal (CLS) region spans residues 278–364 (HRQGFSYDYV…TSPRPVSGME (87 aa)). A compositionally biased stretch (basic and acidic residues) spans 301 to 315 (ADDAERERRDREERL). The disordered stretch occupies residues 301 to 415 (ADDAERERRD…SSGLQSVVHR (115 aa)). Positions 317–342 (HSRNPATRGLPSTASGRLRGTQEVAP) are autoinhibitory. A phosphoserine mark is found at Ser328 and Ser331. Residues 347–358 (TPTSHTANTSPR) show a composition bias toward polar residues. Ser370 is modified (phosphoserine). Arg375 is modified (omega-N-methylarginine). The segment covering 380 to 400 (NISSSDLTGRQDTSRMSTSQI) has biased composition (polar residues). Phosphoserine occurs at positions 382, 383, 384, 407, and 411.

This sequence belongs to the protein kinase superfamily. CK1 Ser/Thr protein kinase family. Casein kinase I subfamily. In terms of assembly, monomer. Component of the circadian core oscillator, which includes the CRY proteins, CLOCK, or NPAS2, ARTNL/BMAL1 or ARTNL2/BMAL2, CSNK1D and/or CSNK1E, TIMELESS and the PER proteins. Interacts with DNMT1 and MAP1A. Interacts directly with PER1 and PER2 which may lead to their degradation. Interacts with MAPT/TAU, SNAPIN, DBNDD2, AIB1/NCOA3 and ESR1. Interacts with AKAP9/AKAP450; this interaction promotes centrosomal subcellular location. Binds to tubulins in mitotic cells upon DNA damage. Interacts with GJA1. Interacts with DDX3X; this interaction enhances CSNK1D kinase activity in vitro, but it is unclear whether this interaction is physiologically relevant. Interacts with FAM83A, FAM83B, FAM83E and FAM83H (via DUF1669). Post-translationally, autophosphorylated on serine and threonine residues; this autophosphorylation represses activity. Reactivated by phosphatase-mediated dephosphorylation. May be dephosphorylated by PP1.

It is found in the cytoplasm. It localises to the nucleus. The protein localises to the cytoskeleton. The protein resides in the microtubule organizing center. Its subcellular location is the centrosome. It is found in the perinuclear region. It localises to the cell membrane. The protein localises to the spindle. The protein resides in the golgi apparatus. The catalysed reaction is L-seryl-[protein] + ATP = O-phospho-L-seryl-[protein] + ADP + H(+). It catalyses the reaction L-threonyl-[protein] + ATP = O-phospho-L-threonyl-[protein] + ADP + H(+). The enzyme catalyses L-seryl-[tau protein] + ATP = O-phospho-L-seryl-[tau protein] + ADP + H(+). It carries out the reaction L-threonyl-[tau protein] + ATP = O-phospho-L-threonyl-[tau protein] + ADP + H(+). Its activity is regulated as follows. Drug-mediated inhibition leads to a delay of the oscillations with the magnitude of this effect dependent upon the timing of drug administration. Inhibited by phosphorylation. Exhibits substrate-dependent heparin activation. Functionally, essential serine/threonine-protein kinase that regulates diverse cellular growth and survival processes including Wnt signaling, DNA repair and circadian rhythms. It can phosphorylate a large number of proteins. Casein kinases are operationally defined by their preferential utilization of acidic proteins such as caseins as substrates. Phosphorylates connexin-43/GJA1, MAP1A, SNAPIN, MAPT/TAU, TOP2A, DCK, HIF1A, EIF6, p53/TP53, DVL2, DVL3, ESR1, AIB1/NCOA3, DNMT1, PKD2, YAP1, PER1 and PER2. Central component of the circadian clock. In balance with PP1, determines the circadian period length through the regulation of the speed and rhythmicity of PER1 and PER2 phosphorylation. Controls PER1 and PER2 nuclear transport and degradation. YAP1 phosphorylation promotes its SCF(beta-TRCP) E3 ubiquitin ligase-mediated ubiquitination and subsequent degradation. DNMT1 phosphorylation reduces its DNA-binding activity. Phosphorylation of ESR1 and AIB1/NCOA3 stimulates their activity and coactivation. Phosphorylation of DVL2 and DVL3 regulates WNT3A signaling pathway that controls neurite outgrowth. Phosphorylates NEDD9/HEF1. EIF6 phosphorylation promotes its nuclear export. Triggers down-regulation of dopamine receptors in the forebrain. Activates DCK in vitro by phosphorylation. TOP2A phosphorylation favors DNA cleavable complex formation. May regulate the formation of the mitotic spindle apparatus in extravillous trophoblast. Modulates connexin-43/GJA1 gap junction assembly by phosphorylation. Probably involved in lymphocyte physiology. Regulates fast synaptic transmission mediated by glutamate. This Bos taurus (Bovine) protein is Casein kinase I isoform delta (CSNK1D).